A 569-amino-acid chain; its full sequence is Urease subunit alpha (569 aa).

Residues 131-569 (GGFDAHIHFI…LPLAQRYFMY (439 aa)) enclose the Urease domain. The Ni(2+) site is built by His-136, His-138, and Lys-219. Residue Lys-219 is modified to N6-carboxylysine. His-221 contacts substrate. His-248 and His-274 together coordinate Ni(2+). His-322 serves as the catalytic Proton donor. Asp-362 lines the Ni(2+) pocket.

It belongs to the metallo-dependent hydrolases superfamily. Urease alpha subunit family. Heterotrimer of UreA (gamma), UreB (beta) and UreC (alpha) subunits. Three heterotrimers associate to form the active enzyme. Ni cation is required as a cofactor. Carboxylation allows a single lysine to coordinate two nickel ions.

It localises to the cytoplasm. The enzyme catalyses urea + 2 H2O + H(+) = hydrogencarbonate + 2 NH4(+). It participates in nitrogen metabolism; urea degradation; CO(2) and NH(3) from urea (urease route): step 1/1. The sequence is that of Urease subunit alpha from Jannaschia sp. (strain CCS1).